Reading from the N-terminus, the 349-residue chain is Phosphoribosylformylglycinamidine cyclo-ligase (349 aa).

The protein belongs to the AIR synthase family.

Its subcellular location is the cytoplasm. It catalyses the reaction 2-formamido-N(1)-(5-O-phospho-beta-D-ribosyl)acetamidine + ATP = 5-amino-1-(5-phospho-beta-D-ribosyl)imidazole + ADP + phosphate + H(+). It functions in the pathway purine metabolism; IMP biosynthesis via de novo pathway; 5-amino-1-(5-phospho-D-ribosyl)imidazole from N(2)-formyl-N(1)-(5-phospho-D-ribosyl)glycinamide: step 2/2. In Albidiferax ferrireducens (strain ATCC BAA-621 / DSM 15236 / T118) (Rhodoferax ferrireducens), this protein is Phosphoribosylformylglycinamidine cyclo-ligase.